A 155-amino-acid chain; its full sequence is Small ribosomal subunit protein uS7c (155 aa).

Belongs to the universal ribosomal protein uS7 family. As to quaternary structure, part of the 30S ribosomal subunit.

It is found in the plastid. It localises to the chloroplast. Functionally, one of the primary rRNA binding proteins, it binds directly to 16S rRNA where it nucleates assembly of the head domain of the 30S subunit. The sequence is that of Small ribosomal subunit protein uS7c (rps7) from Yucca glauca (Soapweed yucca).